The chain runs to 183 residues: Adenine phosphoribosyltransferase (183 aa).

It belongs to the purine/pyrimidine phosphoribosyltransferase family. In terms of assembly, homodimer.

The protein localises to the cytoplasm. The catalysed reaction is AMP + diphosphate = 5-phospho-alpha-D-ribose 1-diphosphate + adenine. Its pathway is purine metabolism; AMP biosynthesis via salvage pathway; AMP from adenine: step 1/1. Its function is as follows. Catalyzes a salvage reaction resulting in the formation of AMP, that is energically less costly than de novo synthesis. The polypeptide is Adenine phosphoribosyltransferase (Citrobacter koseri (strain ATCC BAA-895 / CDC 4225-83 / SGSC4696)).